The chain runs to 182 residues: Protein Syd (182 aa).

The protein belongs to the Syd family.

It is found in the cell inner membrane. Interacts with the SecY protein in vivo. May bind preferentially to an uncomplexed state of SecY, thus functioning either as a chelating agent for excess SecY in the cell or as a regulatory factor that negatively controls the translocase function. This is Protein Syd from Aeromonas hydrophila subsp. hydrophila (strain ATCC 7966 / DSM 30187 / BCRC 13018 / CCUG 14551 / JCM 1027 / KCTC 2358 / NCIMB 9240 / NCTC 8049).